The chain runs to 1335 residues: Regulatory-associated protein of mTOR (1335 aa).

A phosphoserine mark is found at S44 and S122. S696 bears the Phosphoserine; by MAPK8 mark. O-linked (GlcNAc) threonine glycosylation occurs at T700. A Phosphothreonine; by MAPK8 modification is found at T706. S719 and S721 each carry phosphoserine; by RPS6KA1. A Phosphoserine; by AMPK and RPS6KA1 modification is found at S722. S738 carries the phosphoserine modification. A disordered region spans residues 749–771; sequence GSSVAFSPGNLSTSSSASSTLGS. Over residues 755–771 the composition is skewed to low complexity; that stretch reads SPGNLSTSSSASSTLGS. The residue at position 791 (S791) is a Phosphoserine. S792 is subject to Phosphoserine; by AMPK. Phosphoserine is present on residues S836 and S855. Polar residues predominate over residues 853-866; it reads TSSLTQSAPASPTN. Residues 853 to 942 are disordered; that stretch reads TSSLTQSAPA…GPDQTTDDAD (90 aa). A Phosphoserine; by MTOR modification is found at S859. The residue at position 863 (S863) is a Phosphoserine; by MAPK8, MTOR and NLK. A Phosphothreonine modification is found at T865. Phosphoserine is present on S877. Residues 877–887 are compositionally biased toward low complexity; sequence SPPASSTSSCS. The span at 888-898 shows a compositional bias: polar residues; sequence LTNDVAKQTVS. Glycyl lysine isopeptide (Lys-Gly) (interchain with G-Cter in ubiquitin) cross-links involve residues K932 and K948. S982 is subject to Phosphoserine. 7 WD repeats span residues 1020–1061, 1065–1106, 1121–1160, 1164–1203, 1209–1249, 1251–1291, and 1299–1335; these read NRNP…DYFH, PRYT…EKNP, TTRG…KVQD, GADS…SECR, EHTA…SVNV, QIVK…NNIK, and QRVG…KRVR. K1097 carries the N6-acetyllysine modification.

Belongs to the WD repeat RAPTOR family. In terms of assembly, part of the mechanistic target of rapamycin complex 1 (mTORC1) which contains MTOR, MLST8 and RPTOR. mTORC1 associates with AKT1S1/PRAS40, which inhibits its activity. mTORC1 associates with DEPTOR, which regulates its activity. mTORC1 binds to and is inhibited by FKBP12-rapamycin. Forms a complex with MTOR under both leucine-rich and -poor conditions. Interacts with (via TOS motifs) EIF4EBP1 and RPS6KB1; interaction is independent of its association with MTOR. Binds preferentially to poorly or non-phosphorylated forms of EIF4EBP1, and this binding is critical to the ability of MTOR to catalyze phosphorylation. Interacts with ULK1 in a nutrient-dependent manner; the interaction is reduced during starvation. Interacts with GTP-bound form of RagA/RRAGA or RagB/RRAGB and GDP-bound form of RagC/RRAGC or RagD/RRAGD, promoting recruitment of mTORC1 to the lysosomes. Interacts (when phosphorylated by AMPK) with 14-3-3 protein, leading to inhibition of its activity. Interacts with SPAG5; SPAG5 competes with MTOR for RPTOR-binding, resulting in decreased mTORC1 formation. Interacts with WAC; WAC positively regulates MTOR activity by promoting the assembly of the TTT complex composed of TELO2, TTI1 and TTI2 and the RUVBL complex composed of RUVBL1 and RUVBL2 into the TTT-RUVBL complex which leads to the dimerization of the mTORC1 complex and its subsequent activation. Interacts with G3BP1. The complex formed with G3BP1 and SPAG5 is increased by oxidative stress. Interacts with HTR6. Interacts with PIH1D1. Interacts with LARP1. Interacts with BRAT1. Interacts with SIK3. Interacts with SLC38A7; this interaction mediates the recruitment of mTORC1 to the lysosome and its subsequent activation. Post-translationally, insulin-stimulated phosphorylation at Ser-863 by MTOR and MAPK8 regulates mTORC1 activity. Phosphorylated at Ser-863 by NLK in response to stress, disrupting the interaction with small GTPases Rag (RagA/RRAGA, RagB/RRAGB, RagC/RRAGC and/or RagD/RRAGD), thereby preventing lysosome recruitment and activation of the mTORC1 complex. Osmotic stress also induces phosphorylation at Ser-696, Thr-706 and Ser-863 by MAPK8. Ser-863 phosphorylation is required for phosphorylation at Ser-855 and Ser-859. In response to nutrient limitation, phosphorylated at Ser-722 and Ser-792 by AMPK; phosphorylation promotes interaction with 14-3-3 proteins, leading to negative regulation of the mTORC1 complex. Phosphorylation at Ser-722 and Ser-792 by AMPK in response to glucose starvation inhibits O-GlcNAcylation by OGT and subsequent activation of mTORC1. In response to growth factors, phosphorylated at Ser-719, Ser-721 and Ser-722 by RPS6KA1, which stimulates mTORC1 activity. Phosphorylation at Ser-791 by PKA downstream of cAMP inhibits the mTORC1 complex. Phosphorylated at Ser-877 by TBK1, leading to negative regulation of the mTORC1 complex. O-GlcNAcylated by OGT upon glucose sufficiency, promoting interaction with small GTPases Rag (RagA/RRAGA, RagB/RRAGB, RagC/RRAGC and/or RagD/RRAGD) and subsequent recruitment of mTORC1 to lysosomal membranes, leading to activation of the mTORC1 complex. Phosphorylation at Ser-722 and Ser-792 by AMPK in response to glucose starvation inhibits O-GlcNAcylation. In terms of processing, acetylation at Lys-1097 by EP300/p300 in response to leucine metabolite acetyl-coA promotes its activity, leading to activation of the mTORC1 complex. Acetylation is decreased in response to fasting. Phosphorylated at Ser-877 by TBK1, leading to negative regulation of the mTORC1 complex. Post-translationally, ubiquitinated, leading to its degradation by the proteasome. Deubiquitinated by OTUB1 via a non-catalytic mechanism. Ubiquitinated by an E3 ubiquitin ligase complex containing VHL.

The protein resides in the cytoplasm. Its subcellular location is the lysosome. The protein localises to the cytoplasmic granule. Functionally, component of the mechanistic target of rapamycin complex 1 (mTORC1), an evolutionarily conserved central nutrient sensor that stimulates anabolic reactions and macromolecule biosynthesis to promote cellular biomass generation and growth. In response to nutrients, growth factors or amino acids, mTORC1 is recruited to the lysosome membrane and promotes protein, lipid and nucleotide synthesis by phosphorylating several substrates, such as ribosomal protein S6 kinase (RPS6KB1 and RPS6KB2) and EIF4EBP1 (4E-BP1). In the same time, it inhibits catabolic pathways by phosphorylating the autophagy initiation components ULK1 and ATG13, as well as transcription factor TFEB, a master regulators of lysosomal biogenesis and autophagy. The mTORC1 complex is inhibited in response to starvation and amino acid depletion. Within the mTORC1 complex, RPTOR acts both as a molecular adapter, which (1) mediates recruitment of mTORC1 to lysosomal membranes via interaction with small GTPases Rag (RagA/RRAGA, RagB/RRAGB, RagC/RRAGC and/or RagD/RRAGD), and a (2) substrate-specific adapter, which promotes substrate specificity by binding to TOS motif-containing proteins and direct them towards the active site of the MTOR kinase domain for phosphorylation. mTORC1 complex regulates many cellular processes, such as odontoblast and osteoclast differentiation or neuronal transmission. mTORC1 complex in excitatory neuronal transmission is required for the prosocial behavior induced by the psychoactive substance lysergic acid diethylamide (LSD). This chain is Regulatory-associated protein of mTOR, found in Mus musculus (Mouse).